The chain runs to 298 residues: Ectoine dioxygenase (298 aa).

The span at 1-18 (MLQQAIDRDPVDRIDRYP) shows a compositional bias: basic and acidic residues. The interval 1 to 26 (MLQQAIDRDPVDRIDRYPTRTAEPAP) is disordered. Residue Gln-133 coordinates L-ectoine. Fe cation is bound by residues His-150, Asp-152, and His-251.

This sequence belongs to the PhyH family. EctD subfamily. In terms of assembly, homodimer. Requires Fe(2+) as cofactor.

It carries out the reaction L-ectoine + 2-oxoglutarate + O2 = 5-hydroxyectoine + succinate + CO2. Involved in the biosynthesis of 5-hydroxyectoine, called compatible solute, which helps organisms to survive extreme osmotic stress by acting as a highly soluble organic osmolyte. Catalyzes the 2-oxoglutarate-dependent selective hydroxylation of L-ectoine to yield (4S,5S)-5-hydroxyectoine. The sequence is that of Ectoine dioxygenase from Nocardia farcinica (strain IFM 10152).